Consider the following 557-residue polypeptide: Protein PNS1 (557 aa).

Residues 1 to 58 form a disordered region; that stretch reads MSTEKQYQPQQPPPAYTGQGPDNGNAYGYPESYGKTETHSGDSCSGDTSMNPQQQGQQ. The Cytoplasmic segment spans residues 1–99; that stretch reads MSTEKQYQPQ…DNNKPKFNDW (99 aa). Over residues 41-58 the composition is skewed to polar residues; it reads GDSCSGDTSMNPQQQGQQ. A helical membrane pass occupies residues 100–120; it reads PFIIVFLLTLCGFIVVASLTL. Residues 121–147 are Extracellular-facing; the sequence is RAWSQTYSSTGSGIYHDFDTGTLNTNS. The chain crosses the membrane as a helical span at residues 148-168; it reads VILLVFSVVIAIFFAFIGIVL. The Cytoplasmic segment spans residues 169 to 174; sequence CRAYPK. A helical transmembrane segment spans residues 175–195; sequence FFIYAGMIVNILAALGTAIMY. The Extracellular portion of the chain corresponds to 196 to 200; sequence MSLKY. A helical transmembrane segment spans residues 201 to 221; it reads WSAGIVFLIFTFMTAWCYWGM. Residues 222 to 246 lie on the Cytoplasmic side of the membrane; it reads RSRIPLTVAILRVIVLAMKNCPQSL. Residues 247–267 form a helical membrane-spanning segment; sequence FVSFFGTIVASAFAMLFSTVV. At 268–292 the chain is on the extracellular side; the sequence is VATYMKYDPSNTNSGCNVSGGDCSH. The N-linked (GlcNAc...) asparagine glycan is linked to Asn284. The chain crosses the membrane as a helical span at residues 293 to 313; that stretch reads AKLIGVLVVVFFCGYYISEVI. At 314 to 350 the chain is on the cytoplasmic side; that stretch reads RNVMHCTVSGVFGSWYYRYKSDQGMPKWPAMGAFKRA. Residues 351 to 371 traverse the membrane as a helical segment; sequence MTYSFGSICFGSLIVSIIETF. Residues 372 to 393 lie on the Extracellular side of the membrane; sequence RQLLQLGKQAAIASTDNANWIR. A helical transmembrane segment spans residues 394–414; that stretch reads IIFWLIDMLVGFIQWIAQYFN. Residues 415 to 454 are Cytoplasmic-facing; that stretch reads HYAYCIIALYGKPYLKAAKQTWYMFREKGIDALINDNLVN. The helical transmembrane segment at 455 to 475 threads the bilayer; it reads VALGFYSLFASYMSCLFAFLY. Residues 476–488 lie on the Extracellular side of the membrane; it reads LRFTKPGYNSDGD. Residues 489–509 form a helical membrane-spanning segment; it reads FNAPLMAFAFVIALQLTNIAN. Over 510–557 the chain is Cytoplasmic; sequence ETIRSGCATFFTALGHDPEVFQAQYPDRFDEIFRSYPQVLNKLTHQDV.

This sequence belongs to the CTL (choline transporter-like) family.

The protein localises to the cell membrane. In terms of biological role, probably involved in transport through the plasma membrane. The sequence is that of Protein PNS1 (PNS1) from Candida glabrata (strain ATCC 2001 / BCRC 20586 / JCM 3761 / NBRC 0622 / NRRL Y-65 / CBS 138) (Yeast).